The sequence spans 305 residues: GMP synthase [glutamine-hydrolyzing] subunit B (305 aa).

The GMPS ATP-PPase domain maps to valine 2–arginine 184. An ATP-binding site is contributed by serine 29–serine 35.

Heterodimer composed of a glutamine amidotransferase subunit (A) and a GMP-binding subunit (B).

It carries out the reaction XMP + L-glutamine + ATP + H2O = GMP + L-glutamate + AMP + diphosphate + 2 H(+). Its pathway is purine metabolism; GMP biosynthesis; GMP from XMP (L-Gln route): step 1/1. Its function is as follows. Catalyzes the synthesis of GMP from XMP. The chain is GMP synthase [glutamine-hydrolyzing] subunit B from Methanoregula boonei (strain DSM 21154 / JCM 14090 / 6A8).